The sequence spans 217 residues: 3,4-dihydroxy-2-butanone 4-phosphate synthase (217 aa).

D-ribulose 5-phosphate is bound by residues 37-38 (RE), D42, 150-154 (RRGHT), and E174. E38 contributes to the Mg(2+) binding site. H153 is a Mg(2+) binding site.

It belongs to the DHBP synthase family. Homodimer. It depends on Mg(2+) as a cofactor. Requires Mn(2+) as cofactor.

The catalysed reaction is D-ribulose 5-phosphate = (2S)-2-hydroxy-3-oxobutyl phosphate + formate + H(+). It participates in cofactor biosynthesis; riboflavin biosynthesis; 2-hydroxy-3-oxobutyl phosphate from D-ribulose 5-phosphate: step 1/1. In terms of biological role, catalyzes the conversion of D-ribulose 5-phosphate to formate and 3,4-dihydroxy-2-butanone 4-phosphate. In Shewanella sp. (strain W3-18-1), this protein is 3,4-dihydroxy-2-butanone 4-phosphate synthase.